Here is a 516-residue protein sequence, read N- to C-terminus: MMDVSSWKEMEVALVSFDNADQIVEDPCYSNDLSPASQSRKGHPSCANLLSNWRILINSENANNETIFSRFSAEFSEHLVGERVGMEEGDQRVIINIAGLRFETRLKTLNQFPETLLGDPEKRMRYFDSMRNEYFFDRNRPSFDGILYYYQSGGKIRRPANVPIDVFADEITFYELGDEAMDQFREDEGFIKDPETLLPTNDFHRQFWLLFEYPESSSAARGVALVSVLVIVISIIIFCMETLPEFREEREYKSTQELSKNTTDTLLAHSTFTDPFFVIETACIIWFSFELFVRFIVCPSKTEFFKNIMNIIDIVSIIPYFVTLTTELIQQSELNGQQNMSLAILRIIRLVRVFRIFKLSRHSKGLQILGQTLKASMRELGLLIFFLFIGVILFSSAVYFAEVDEPQSHFSSIPDGFWWAVVTMTTVGYGDMCPTTLGGKIVGTLCAIAGVLTIALPVPVIVSNFNYFYHRETENEEKQILPGEVERILNSVVTGNDSMESLNKTNGGYPRDKAKK.

A helical membrane pass occupies residues 223-244; that stretch reads VALVSVLVIVISIIIFCMETLP. Asn261 carries an N-linked (GlcNAc...) asparagine glycan. The helical transmembrane segment at 276-296 threads the bilayer; it reads FFVIETACIIWFSFELFVRFI. The helical transmembrane segment at 308–328 threads the bilayer; that stretch reads IMNIIDIVSIIPYFVTLTTEL. N-linked (GlcNAc...) asparagine glycosylation occurs at Asn339. The chain crosses the membrane as a helical; Voltage-sensor span at residues 344–363; that stretch reads ILRIIRLVRVFRIFKLSRHS. A helical membrane pass occupies residues 380 to 400; sequence LGLLIFFLFIGVILFSSAVYF. Residues 426–431 carry the Selectivity filter motif; sequence TVGYGD. Residues 441–461 traverse the membrane as a helical segment; that stretch reads IVGTLCAIAGVLTIALPVPVI. The N-linked (GlcNAc...) asparagine glycan is linked to Asn503.

This sequence belongs to the potassium channel family. A (Shaker) (TC 1.A.1.2) subfamily. Kv1.8/KCNA10 sub-subfamily. Homotetramer. Detected in brain, cochlear sensory epithelium, cochlear ganglion, tegumentum vasculosum. Detected at low levels in cochlear lagena.

It localises to the membrane. The enzyme catalyses K(+)(in) = K(+)(out). Its activity is regulated as follows. The channel activity is up-regulated by cAMP. In terms of biological role, voltage-gated potassium ion channel that mediates K(+) permeability of excitable membranes. When opened in response to the voltage difference across the membrane, KCNA10 channel selectively allows the flow of potassium ions across the membrane down their electrochemical gradient. In Gallus gallus (Chicken), this protein is Potassium voltage-gated channel subfamily A member 10 (KCNA10).